The primary structure comprises 187 residues: Dihydrofolate reductase (187 aa).

The 182-residue stretch at 4–185 (PLNCIVAVSQ…IKYKFEVYEK (182 aa)) folds into the DHFR domain. NADP(+)-binding positions include Ala10 and 16-22 (GIGKNGD). 31 to 36 (EFQYFQ) contacts substrate. An NADP(+)-binding site is contributed by 55 to 57 (RKT). Residue Arg71 coordinates substrate. NADP(+) is bound by residues 77 to 79 (SRE) and 117 to 124 (GGSSVYKE).

Belongs to the dihydrofolate reductase family. Homodimer.

It is found in the mitochondrion. It localises to the cytoplasm. The enzyme catalyses (6S)-5,6,7,8-tetrahydrofolate + NADP(+) = 7,8-dihydrofolate + NADPH + H(+). It participates in cofactor biosynthesis; tetrahydrofolate biosynthesis; 5,6,7,8-tetrahydrofolate from 7,8-dihydrofolate: step 1/1. Key enzyme in folate metabolism. Contributes to the de novo mitochondrial thymidylate biosynthesis pathway. Catalyzes an essential reaction for de novo glycine and purine synthesis, and for DNA precursor synthesis. Binds its own mRNA and that of DHFR2. This Bos taurus (Bovine) protein is Dihydrofolate reductase (DHFR).